A 227-amino-acid polypeptide reads, in one-letter code: GTPase ERas (227 aa).

The segment covering 1–19 (MALPTKSSILDLSSGTPCT) has biased composition (polar residues). The segment at 1–25 (MALPTKSSILDLSSGTPCTRSPEES) is disordered. Residue 48 to 55 (GASGVGKS) coordinates GTP. Residues 70-78 (HDPTIQDSY) carry the Effector region motif. GTP is bound by residues 95–99 (DTSGQ) and 151–154 (NKCD). Residues Cys-220 and Cys-222 are each lipidated (S-palmitoyl cysteine). At Cys-224 the chain carries Cysteine methyl ester. Cys-224 carries the S-farnesyl cysteine lipid modification. A propeptide spans 225-227 (SVA) (removed in mature form).

The protein belongs to the small GTPase superfamily. Ras family. Interacts with PIK3CD. In terms of tissue distribution, expressed in several undifferentiated mouse embryonic stem cell lines.

Its subcellular location is the cell membrane. The enzyme catalyses GTP + H2O = GDP + phosphate + H(+). With respect to regulation, alternates between an inactive form bound to GDP and an active form bound to GTP. Activated by a guanine nucleotide-exchange factor (GEF) and inactivated by a GTPase-activating protein (GAP). Ras proteins bind GDP/GTP and possess intrinsic GTPase activity. Plays an important role in the tumor-like growth properties of embryonic stem cells. The chain is GTPase ERas (Eras) from Mus musculus (Mouse).